The following is a 147-amino-acid chain: SPI-1 type 3 secretion system pilotin (147 aa).

Residues 1–15 form the signal peptide; sequence MKKFYSCLPVFLLIG. Residue C16 is the site of N-palmitoyl cysteine attachment. The S-diacylglycerol cysteine moiety is linked to residue C16.

Belongs to the InvH family.

The protein localises to the cell outer membrane. Involved in the synthesis of the type III secretion system (T3SS), also called injectisome, which is used to inject bacterial effector proteins into eukaryotic host cells. Pilot protein that is required for the proper localization of the secretin InvG/SctC in the outer membrane. Necessary for efficient adherence and entry of these organisms into cultured epithelial cells. This chain is SPI-1 type 3 secretion system pilotin, found in Salmonella typhimurium (strain SL1344).